We begin with the raw amino-acid sequence, 86 residues long: HssA/B-like protein 60 (86 aa).

Residues 11–33 (GNIKSSSKSNIASSSSSSSSQSL) form a disordered region.

It belongs to the hssA/B family.

This is HssA/B-like protein 60 (hssl60) from Dictyostelium discoideum (Social amoeba).